Here is a 166-residue protein sequence, read N- to C-terminus: Regulatory protein RecX (166 aa).

This sequence belongs to the RecX family.

It localises to the cytoplasm. In terms of biological role, modulates RecA activity. In Salmonella agona (strain SL483), this protein is Regulatory protein RecX.